The following is a 188-amino-acid chain: Crossover junction endodeoxyribonuclease RuvC (188 aa).

Residues Asp-7, Glu-68, and Asp-141 contribute to the active site. Mg(2+) is bound by residues Asp-7, Glu-68, and Asp-141.

It belongs to the RuvC family. As to quaternary structure, homodimer which binds Holliday junction (HJ) DNA. The HJ becomes 2-fold symmetrical on binding to RuvC with unstacked arms; it has a different conformation from HJ DNA in complex with RuvA. In the full resolvosome a probable DNA-RuvA(4)-RuvB(12)-RuvC(2) complex forms which resolves the HJ. Mg(2+) is required as a cofactor.

Its subcellular location is the cytoplasm. It carries out the reaction Endonucleolytic cleavage at a junction such as a reciprocal single-stranded crossover between two homologous DNA duplexes (Holliday junction).. Its function is as follows. The RuvA-RuvB-RuvC complex processes Holliday junction (HJ) DNA during genetic recombination and DNA repair. Endonuclease that resolves HJ intermediates. Cleaves cruciform DNA by making single-stranded nicks across the HJ at symmetrical positions within the homologous arms, yielding a 5'-phosphate and a 3'-hydroxyl group; requires a central core of homology in the junction. The consensus cleavage sequence is 5'-(A/T)TT(C/G)-3'. Cleavage occurs on the 3'-side of the TT dinucleotide at the point of strand exchange. HJ branch migration catalyzed by RuvA-RuvB allows RuvC to scan DNA until it finds its consensus sequence, where it cleaves and resolves the cruciform DNA. In Mycobacterium avium (strain 104), this protein is Crossover junction endodeoxyribonuclease RuvC.